An 82-amino-acid chain; its full sequence is UPF0180 protein BALH_1248 (82 aa).

The protein belongs to the UPF0180 family.

The protein is UPF0180 protein BALH_1248 of Bacillus thuringiensis (strain Al Hakam).